Reading from the N-terminus, the 332-residue chain is PTS-dependent dihydroxyacetone kinase, dihydroxyacetone-binding subunit DhaK (332 aa).

The DhaK domain maps to 9-331 (QPQDVVSEML…LNEDVKTISW (323 aa)). Residues 55 to 58 (GSGH), Lys106, and Asp111 contribute to the dihydroxyacetone site. The active-site Proton acceptor is His58. His220 serves as the catalytic Tele-hemiaminal-histidine intermediate.

As to quaternary structure, homodimer. The dihydroxyacetone kinase complex is composed of a homodimer of DhaM, a homodimer of DhaK and the subunit DhaL.

The catalysed reaction is dihydroxyacetone + phosphoenolpyruvate = dihydroxyacetone phosphate + pyruvate. It functions in the pathway polyol metabolism; glycerol degradation. Dihydroxyacetone binding subunit of the dihydroxyacetone kinase, which is responsible the phosphoenolpyruvate (PEP)-dependent phosphorylation of dihydroxyacetone via a phosphoryl group transfer from DhaL-ATP. This Lactococcus lactis subsp. lactis (strain IL1403) (Streptococcus lactis) protein is PTS-dependent dihydroxyacetone kinase, dihydroxyacetone-binding subunit DhaK.